A 339-amino-acid polypeptide reads, in one-letter code: Phosphate acyltransferase (339 aa).

Belongs to the PlsX family. Homodimer. Probably interacts with PlsY.

Its subcellular location is the cytoplasm. It carries out the reaction a fatty acyl-[ACP] + phosphate = an acyl phosphate + holo-[ACP]. The protein operates within lipid metabolism; phospholipid metabolism. Catalyzes the reversible formation of acyl-phosphate (acyl-PO(4)) from acyl-[acyl-carrier-protein] (acyl-ACP). This enzyme utilizes acyl-ACP as fatty acyl donor, but not acyl-CoA. This Helicobacter acinonychis (strain Sheeba) protein is Phosphate acyltransferase.